Here is a 1053-residue protein sequence, read N- to C-terminus: Translation initiation factor IF-2 (1053 aa).

A compositionally biased stretch (polar residues) spans 1–20 (MSESKNSGENTLSVTPTKTL). The tract at residues 1–442 (MSESKNSGEN…TATGGEEEER (442 aa)) is disordered. 2 stretches are compositionally biased toward low complexity: residues 64-76 (EAAP…ATVT) and 83-102 (RPAA…AAVP). Composition is skewed to pro residues over residues 131–141 (PAQPKAEPVPA) and 150–161 (APVPPVPAPSAP). Over residues 178-220 (PVSQAKPIQTAPVQTAPAAQASASQTTGPRPVAAGPRPATGAA) the composition is skewed to low complexity. Gly residues predominate over residues 255–264 (GGRGGPGRGE). Composition is skewed to basic and acidic residues over residues 279 to 288 (LTDEEREARA) and 295 to 353 (RIRE…EAKR). Residues 375-386 (TATAAAPAAAAP) are compositionally biased toward low complexity. The tr-type G domain maps to 550–720 (PRPPVVTIMG…ALQAELLDLK (171 aa)). Positions 559–566 (GHVDHGKT) are G1. Residue 559–566 (GHVDHGKT) coordinates GTP. Positions 584–588 (GITQH) are G2. Positions 606 to 609 (DTPG) are G3. Residues 606-610 (DTPGH) and 660-663 (NKID) each bind GTP. Residues 660 to 663 (NKID) form a G4 region. Residues 696-698 (SAT) are G5.

It belongs to the TRAFAC class translation factor GTPase superfamily. Classic translation factor GTPase family. IF-2 subfamily.

The protein localises to the cytoplasm. Functionally, one of the essential components for the initiation of protein synthesis. Protects formylmethionyl-tRNA from spontaneous hydrolysis and promotes its binding to the 30S ribosomal subunits. Also involved in the hydrolysis of GTP during the formation of the 70S ribosomal complex. The chain is Translation initiation factor IF-2 from Beijerinckia indica subsp. indica (strain ATCC 9039 / DSM 1715 / NCIMB 8712).